The chain runs to 623 residues: Mu-like prophage FluMu defective tail fiber protein (623 aa).

This sequence to phage Mu protein S.

This chain is Mu-like prophage FluMu defective tail fiber protein, found in Haemophilus influenzae (strain ATCC 51907 / DSM 11121 / KW20 / Rd).